The following is a 145-amino-acid chain: D-aminoacyl-tRNA deacylase (145 aa).

The Gly-cisPro motif, important for rejection of L-amino acids motif lies at Gly137–Pro138.

It belongs to the DTD family. In terms of assembly, homodimer.

The protein localises to the cytoplasm. The enzyme catalyses glycyl-tRNA(Ala) + H2O = tRNA(Ala) + glycine + H(+). The catalysed reaction is a D-aminoacyl-tRNA + H2O = a tRNA + a D-alpha-amino acid + H(+). In terms of biological role, an aminoacyl-tRNA editing enzyme that deacylates mischarged D-aminoacyl-tRNAs. Also deacylates mischarged glycyl-tRNA(Ala), protecting cells against glycine mischarging by AlaRS. Acts via tRNA-based rather than protein-based catalysis; rejects L-amino acids rather than detecting D-amino acids in the active site. By recycling D-aminoacyl-tRNA to D-amino acids and free tRNA molecules, this enzyme counteracts the toxicity associated with the formation of D-aminoacyl-tRNA entities in vivo and helps enforce protein L-homochirality. This chain is D-aminoacyl-tRNA deacylase, found in Colwellia psychrerythraea (strain 34H / ATCC BAA-681) (Vibrio psychroerythus).